A 98-amino-acid polypeptide reads, in one-letter code: Large ribosomal subunit protein uL23 (98 aa).

The protein belongs to the universal ribosomal protein uL23 family. As to quaternary structure, part of the 50S ribosomal subunit. Contacts protein L29, and trigger factor when it is bound to the ribosome.

Its function is as follows. One of the early assembly proteins it binds 23S rRNA. One of the proteins that surrounds the polypeptide exit tunnel on the outside of the ribosome. Forms the main docking site for trigger factor binding to the ribosome. The polypeptide is Large ribosomal subunit protein uL23 (Streptococcus gordonii (strain Challis / ATCC 35105 / BCRC 15272 / CH1 / DL1 / V288)).